Consider the following 1404-residue polypeptide: G8 domain-containing protein DDB_G0286897 (1404 aa).

The signal sequence occupies residues 1-20 (MNYFKYFIFVVFLFFTIVKC). Helical transmembrane passes span 97–117 (LVGFNWISMLIASLLSIGLFA) and 128–148 (IIILIIGFICLSLMINGIQSI). Asparagine 352, asparagine 365, asparagine 413, asparagine 481, asparagine 639, asparagine 838, asparagine 979, asparagine 1003, asparagine 1017, asparagine 1253, and asparagine 1334 each carry an N-linked (GlcNAc...) asparagine glycan. Residues 553–679 (STWASGFVPL…YHNTWTKLST (127 aa)) form the G8 domain.

This sequence belongs to the comF family.

It is found in the membrane. In Dictyostelium discoideum (Social amoeba), this protein is G8 domain-containing protein DDB_G0286897.